The following is a 38-amino-acid chain: Potassium channel toxin alpha-KTx 6.4 (38 aa).

Disulfide bonds link Cys-6–Cys-27, Cys-12–Cys-32, Cys-16–Cys-34, and Cys-22–Cys-37.

The protein belongs to the short scorpion toxin superfamily. Potassium channel inhibitor family. Alpha-KTx 06 subfamily. Expressed by the venom gland.

The protein resides in the secreted. Its function is as follows. Potently, completely and reversibly blocks voltage-gated potassium channel Kv1.2/KCNA2 and Shaker B (Sh). Also blocks small conductance (SK) calcium-activated potassium channel (KCNN). The polypeptide is Potassium channel toxin alpha-KTx 6.4 (Pandinus imperator (Emperor scorpion)).